A 308-amino-acid polypeptide reads, in one-letter code: Cyclopropane mycolic acid synthase 2 (308 aa).

S-adenosyl-L-methionine is bound by residues 44-45, 79-87, 105-110, and 137-138; these read YS, LLDIGCGWG, TLSANQ, and WE. C290 is an active-site residue.

It belongs to the CFA/CMAS family. In terms of assembly, homodimer.

It is found in the cytoplasm. It catalyses the reaction a 1-acyl-2-(9Z)-enoyl-sn-glycero-3-phospholipid + S-adenosyl-L-methionine = a 1-acyl-2-(9-cyclopronane)-acyl-sn-glycero-3-phospholipid + S-adenosyl-L-homocysteine + H(+). The protein operates within lipid metabolism; mycolic acid biosynthesis. Its function is as follows. Catalyzes the formation of trans cyclopropanated ketomycolate or methoxymycolate through the conversion of a double bond to a cyclopropane ring at the proximal position of an oxygenated mycolic acid via the transfer of a methylene group from S-adenosyl-L-methionine. In the absence of MmaA2, CmaA2 has a non-specific cis-cyclopropanating activity and is able to catalyze the conversion of a double bond to a cis cyclopropane ring at the distal position of an alpha mycolic acid. Cyclopropanated mycolic acids are key factors participating in cell envelope permeability, host immunomodulation and persistence. The sequence is that of Cyclopropane mycolic acid synthase 2 (cmaA2) from Mycobacterium leprae (strain TN).